The sequence spans 95 residues: MRDARDVLKRPVISEKSVGLIEENKYSFWVDTAANKIEIKAAVEKMFKVKVVDVRTINVDGKKKRVGKHVGRTADRKKAIVTLKAGDRIEGFAGL.

This sequence belongs to the universal ribosomal protein uL23 family. As to quaternary structure, part of the 50S ribosomal subunit. Contacts protein L29, and trigger factor when it is bound to the ribosome.

Its function is as follows. One of the early assembly proteins it binds 23S rRNA. One of the proteins that surrounds the polypeptide exit tunnel on the outside of the ribosome. Forms the main docking site for trigger factor binding to the ribosome. This Desulfitobacterium hafniense (strain Y51) protein is Large ribosomal subunit protein uL23.